We begin with the raw amino-acid sequence, 332 residues long: NAD-dependent protein deacetylase hst2 (332 aa).

The Deacetylase sirtuin-type domain maps to 7–269; sequence KHVDSSKHLE…RALCKLLGWS (263 aa). NAD(+)-binding positions include 35 to 55 and 118 to 121; these read GAGI…TGIY and QNID. H138 serves as the catalytic Proton acceptor. The Zn(2+) site is built by C146, C149, C170, and C173. Residues 210–212, 235–237, and C255 each bind NAD(+); these read GTS and NRE.

The protein belongs to the sirtuin family. Class I subfamily. Zn(2+) serves as cofactor.

The protein localises to the cytoplasm. Its subcellular location is the nucleus. The catalysed reaction is N(6)-acetyl-L-lysyl-[protein] + NAD(+) + H2O = 2''-O-acetyl-ADP-D-ribose + nicotinamide + L-lysyl-[protein]. Its function is as follows. NAD-dependent histone deacetylase, which could function in telomeric silencing, cell cycle progression and chromosome stability. This Schizosaccharomyces pombe (strain 972 / ATCC 24843) (Fission yeast) protein is NAD-dependent protein deacetylase hst2 (hst2).